The primary structure comprises 195 residues: ATP-dependent Clp protease proteolytic subunit (195 aa).

The Nucleophile role is filled by Ser-98. His-123 is an active-site residue.

Belongs to the peptidase S14 family. In terms of assembly, fourteen ClpP subunits assemble into 2 heptameric rings which stack back to back to give a disk-like structure with a central cavity, resembling the structure of eukaryotic proteasomes.

Its subcellular location is the cytoplasm. The enzyme catalyses Hydrolysis of proteins to small peptides in the presence of ATP and magnesium. alpha-casein is the usual test substrate. In the absence of ATP, only oligopeptides shorter than five residues are hydrolyzed (such as succinyl-Leu-Tyr-|-NHMec, and Leu-Tyr-Leu-|-Tyr-Trp, in which cleavage of the -Tyr-|-Leu- and -Tyr-|-Trp bonds also occurs).. In terms of biological role, cleaves peptides in various proteins in a process that requires ATP hydrolysis. Has a chymotrypsin-like activity. Plays a major role in the degradation of misfolded proteins. The protein is ATP-dependent Clp protease proteolytic subunit of Thermodesulfovibrio yellowstonii (strain ATCC 51303 / DSM 11347 / YP87).